The sequence spans 441 residues: Histidine--tRNA ligase (441 aa).

The protein belongs to the class-II aminoacyl-tRNA synthetase family. As to quaternary structure, homodimer.

It localises to the cytoplasm. It catalyses the reaction tRNA(His) + L-histidine + ATP = L-histidyl-tRNA(His) + AMP + diphosphate + H(+). This Koribacter versatilis (strain Ellin345) protein is Histidine--tRNA ligase.